A 566-amino-acid chain; its full sequence is MKTIIALSYIFCLVLGQDFPGNDNSTATLCLGHHAVPNGTLVKTITNDQIEVTNATELVQSSSTGKICNNPHRILDGIDCTLIDALLGDPHCDGFQNETWDLFVERSKAFSNCYPYDVPDYASLRSLVASSGTLEFINEGFTWTGVTQNGGSNACKRGPDSGFFSRLNWLYKSGSTYPVLNVTMPNNDNFDKLYIWGVHHPSTDQEQTSLYVQASGRVTVSTKRSQQTIIPNIGSRPWVRGLSSRISIYWTIVKPGDILVINSNGNLIAPRGYFKMRTGKSSIMRSDAPIGTCISECITPNGSIPNDKPFQNVNKITYGACPKYVKQNTLKLATGMRNVPEKQTRGLFGAIAGFIENGWEGMIDGWYGFRHQNSEGTGQAADLKSTQAAIDQINGKLNRVIEKTNEKFHQIEKEFSEVEGRIQDLEKYVEDTKIDLWSYNAELLVALENQHTIDLTDSEMNKLFEKTRRQLRENAEDMGNGCFKIYHKCDNACIGSIRNGTYDHDVYRDEALNNRFQIKGVELKSGYKDWILWISFAISCFLLCVVLLGFIMWACQKGNIRCNICI.

A signal peptide spans 1–16; the sequence is MKTIIALSYIFCLVLG. Residues 17–530 are Extracellular-facing; it reads QDFPGNDNST…VELKSGYKDW (514 aa). N-linked (GlcNAc...) asparagine; by host glycans are attached at residues asparagine 24, asparagine 38, and asparagine 54. 6 disulfides stabilise this stretch: cysteine 30–cysteine 482, cysteine 68–cysteine 293, cysteine 80–cysteine 92, cysteine 113–cysteine 155, cysteine 297–cysteine 321, and cysteine 489–cysteine 493. N-linked (GlcNAc...) asparagine; by host glycosylation occurs at asparagine 97. Residues asparagine 181 and asparagine 301 are each glycosylated (N-linked (GlcNAc...) asparagine; by host). Asparagine 499 carries an N-linked (GlcNAc...) asparagine; by host glycan. A helical membrane pass occupies residues 531–551; it reads ILWISFAISCFLLCVVLLGFI. At 552 to 566 the chain is on the cytoplasmic side; that stretch reads MWACQKGNIRCNICI. Residues cysteine 555, cysteine 562, and cysteine 565 are each lipidated (S-palmitoyl cysteine; by host).

Belongs to the influenza viruses hemagglutinin family. Homotrimer of disulfide-linked HA1-HA2. In terms of processing, palmitoylated. Post-translationally, in natural infection, inactive HA is matured into HA1 and HA2 outside the cell by one or more trypsin-like, arginine-specific endoprotease secreted by the bronchial epithelial cells. One identified protease that may be involved in this process is secreted in lungs by club cells.

The protein resides in the virion membrane. Its subcellular location is the host apical cell membrane. Binds to sialic acid-containing receptors on the cell surface, bringing about the attachment of the virus particle to the cell. This attachment induces virion internalization of about two third of the virus particles through clathrin-dependent endocytosis and about one third through a clathrin- and caveolin-independent pathway. Plays a major role in the determination of host range restriction and virulence. Class I viral fusion protein. Responsible for penetration of the virus into the cell cytoplasm by mediating the fusion of the membrane of the endocytosed virus particle with the endosomal membrane. Low pH in endosomes induces an irreversible conformational change in HA2, releasing the fusion hydrophobic peptide. Several trimers are required to form a competent fusion pore. Functionally, binds to sialic acid-containing receptors on the cell surface, bringing about the attachment of the virus particle to the cell. This attachment induces virion internalization either through clathrin-dependent endocytosis or through clathrin- and caveolin-independent pathway. Plays a major role in the determination of host range restriction and virulence. Class I viral fusion protein. Responsible for penetration of the virus into the cell cytoplasm by mediating the fusion of the membrane of the endocytosed virus particle with the endosomal membrane. Low pH in endosomes induces an irreversible conformational change in HA2, releasing the fusion hydrophobic peptide. Several trimers are required to form a competent fusion pore. The chain is Hemagglutinin from Aves (whales).